The chain runs to 419 residues: Serine hydroxymethyltransferase (419 aa).

(6S)-5,6,7,8-tetrahydrofolate contacts are provided by residues leucine 121 and 125–127 (GHL). At lysine 229 the chain carries N6-(pyridoxal phosphate)lysine. A (6S)-5,6,7,8-tetrahydrofolate-binding site is contributed by 354–356 (SPF).

This sequence belongs to the SHMT family. Homodimer. The cofactor is pyridoxal 5'-phosphate.

Its subcellular location is the cytoplasm. It catalyses the reaction (6R)-5,10-methylene-5,6,7,8-tetrahydrofolate + glycine + H2O = (6S)-5,6,7,8-tetrahydrofolate + L-serine. It functions in the pathway one-carbon metabolism; tetrahydrofolate interconversion. The protein operates within amino-acid biosynthesis; glycine biosynthesis; glycine from L-serine: step 1/1. In terms of biological role, catalyzes the reversible interconversion of serine and glycine with tetrahydrofolate (THF) serving as the one-carbon carrier. This reaction serves as the major source of one-carbon groups required for the biosynthesis of purines, thymidylate, methionine, and other important biomolecules. Also exhibits THF-independent aldolase activity toward beta-hydroxyamino acids, producing glycine and aldehydes, via a retro-aldol mechanism. In Coxiella burnetii (strain RSA 331 / Henzerling II), this protein is Serine hydroxymethyltransferase.